Consider the following 213-residue polypeptide: ATP phosphoribosyltransferase (213 aa).

This sequence belongs to the ATP phosphoribosyltransferase family. Short subfamily. As to quaternary structure, heteromultimer composed of HisG and HisZ subunits.

The protein localises to the cytoplasm. It catalyses the reaction 1-(5-phospho-beta-D-ribosyl)-ATP + diphosphate = 5-phospho-alpha-D-ribose 1-diphosphate + ATP. Its pathway is amino-acid biosynthesis; L-histidine biosynthesis; L-histidine from 5-phospho-alpha-D-ribose 1-diphosphate: step 1/9. Catalyzes the condensation of ATP and 5-phosphoribose 1-diphosphate to form N'-(5'-phosphoribosyl)-ATP (PR-ATP). Has a crucial role in the pathway because the rate of histidine biosynthesis seems to be controlled primarily by regulation of HisG enzymatic activity. In Synechococcus sp. (strain RCC307), this protein is ATP phosphoribosyltransferase.